The sequence spans 238 residues: Purine nucleoside phosphorylase DeoD-type (238 aa).

His-4 contacts a purine D-ribonucleoside. Residues Gly-20, Arg-24, Arg-43, and 87-90 (RVGS) contribute to the phosphate site. A purine D-ribonucleoside is bound by residues 179–181 (EME) and 203–204 (SD). Asp-204 serves as the catalytic Proton donor.

It belongs to the PNP/UDP phosphorylase family. As to quaternary structure, homohexamer; trimer of homodimers.

It carries out the reaction a purine D-ribonucleoside + phosphate = a purine nucleobase + alpha-D-ribose 1-phosphate. The catalysed reaction is a purine 2'-deoxy-D-ribonucleoside + phosphate = a purine nucleobase + 2-deoxy-alpha-D-ribose 1-phosphate. Its function is as follows. Catalyzes the reversible phosphorolytic breakdown of the N-glycosidic bond in the beta-(deoxy)ribonucleoside molecules, with the formation of the corresponding free purine bases and pentose-1-phosphate. This chain is Purine nucleoside phosphorylase DeoD-type, found in Haemophilus influenzae (strain PittGG).